The primary structure comprises 150 residues: Interferon antagonist OPG027 (150 aa).

Belongs to the orthopoxvirus OPG027 family.

In terms of biological role, inhibits antiviral activity induced by type I interferons. Does not block signal transduction of IFN, but is important to counteract the host antiviral state induced by a pre-treatment with IFN. The protein is Interferon antagonist OPG027 (OPG027) of Homo sapiens (Human).